The chain runs to 125 residues: Translation initiation factor 5A (125 aa).

Residue lysine 35 is modified to Hypusine.

The protein belongs to the eIF-5A family.

The protein localises to the cytoplasm. In terms of biological role, functions by promoting the formation of the first peptide bond. The chain is Translation initiation factor 5A (eIF5A) from Methanoculleus marisnigri (strain ATCC 35101 / DSM 1498 / JR1).